The chain runs to 149 residues: Probable cyclic pyranopterin monophosphate synthase (149 aa).

Residues 67–69 (LCH) and 103–104 (ME) each bind substrate. Asp118 is a catalytic residue.

This sequence belongs to the MoaC family. In terms of assembly, homohexamer; trimer of dimers.

The enzyme catalyses (8S)-3',8-cyclo-7,8-dihydroguanosine 5'-triphosphate = cyclic pyranopterin phosphate + diphosphate. It functions in the pathway cofactor biosynthesis; molybdopterin biosynthesis. In terms of biological role, catalyzes the conversion of (8S)-3',8-cyclo-7,8-dihydroguanosine 5'-triphosphate to cyclic pyranopterin monophosphate (cPMP). This chain is Probable cyclic pyranopterin monophosphate synthase, found in Saccharolobus solfataricus (strain ATCC 35092 / DSM 1617 / JCM 11322 / P2) (Sulfolobus solfataricus).